Reading from the N-terminus, the 373-residue chain is ATP phosphoribosyltransferase regulatory subunit (373 aa).

Belongs to the class-II aminoacyl-tRNA synthetase family. HisZ subfamily. As to quaternary structure, heteromultimer composed of HisG and HisZ subunits.

It is found in the cytoplasm. It participates in amino-acid biosynthesis; L-histidine biosynthesis; L-histidine from 5-phospho-alpha-D-ribose 1-diphosphate: step 1/9. Functionally, required for the first step of histidine biosynthesis. May allow the feedback regulation of ATP phosphoribosyltransferase activity by histidine. The protein is ATP phosphoribosyltransferase regulatory subunit of Rhizobium etli (strain ATCC 51251 / DSM 11541 / JCM 21823 / NBRC 15573 / CFN 42).